The chain runs to 105 residues: uncharacterized protein (105 aa).

A compositionally biased stretch (low complexity) spans 31–47 (SVNLPSPSVKPSVTPSV). The tract at residues 31–80 (SVNLPSPSVKPSVTPSVKKPPHVIRSDYSKPREKPAKVAKKPTVKNDKKP) is disordered. Positions 54–66 (IRSDYSKPREKPA) are enriched in basic and acidic residues.

This is an uncharacterized protein from Caenorhabditis elegans.